Here is a 75-residue protein sequence, read N- to C-terminus: Acyl carrier protein (75 aa).

The Carrier domain maps to 1–75 (MALFDDVKEV…GDAIKFIENV (75 aa)). Ser-36 is modified (O-(pantetheine 4'-phosphoryl)serine).

The protein belongs to the acyl carrier protein (ACP) family. 4'-phosphopantetheine is transferred from CoA to a specific serine of apo-ACP by AcpS. This modification is essential for activity because fatty acids are bound in thioester linkage to the sulfhydryl of the prosthetic group.

The protein resides in the cytoplasm. It functions in the pathway lipid metabolism; fatty acid biosynthesis. Its function is as follows. Carrier of the growing fatty acid chain in fatty acid biosynthesis. In Sulfurovum sp. (strain NBC37-1), this protein is Acyl carrier protein.